We begin with the raw amino-acid sequence, 264 residues long: Major prion protein 1 (264 aa).

A signal peptide spans 1–24 (MVKSHIGSWILVLFVAMWSDVALC). The interaction with GRB2, ERI3 and SYN1 stretch occupies residues 25-241 (KKRPKPGGGW…ESEAYYQRGA (217 aa)). The disordered stretch occupies residues 28-118 (PKPGGGWNTG…QWNKPSKPKT (91 aa)). A run of 6 repeats spans residues 54-62 (SQGGGGWGQ), 63-70 (PHGGGWGQ), 71-78 (PHGGGWGQ), 79-86 (PHGGGWGQ), 87-94 (PHGGGWGQ), and 95-103 (PHGGGGWGQ). Positions 54 to 103 (SQGGGGWGQPHGGGWGQPHGGGWGQPHGGGWGQPHGGGWGQPHGGGGWGQ) are 6 X 8 AA tandem repeats of P-H-G-G-G-W-G-Q. Over residues 55 to 107 (QGGGGWGQPHGGGWGQPHGGGWGQPHGGGWGQPHGGGWGQPHGGGGWGQGGTH) the composition is skewed to gly residues. 12 residues coordinate Cu(2+): His-72, Gly-73, Gly-74, His-80, Gly-81, Gly-82, His-88, Gly-89, Gly-90, His-96, Gly-98, and Gly-99. An intrachain disulfide couples Cys-190 to Cys-225. 2 N-linked (GlcNAc...) asparagine glycosylation sites follow: Asn-192 and Asn-208. Ala-241 carries the GPI-anchor amidated alanine lipid modification. Positions 242–264 (SVILFSSPPVILLISFLIFLIVG) are cleaved as a propeptide — removed in mature form.

The protein belongs to the prion family. As to quaternary structure, monomer and homodimer. Has a tendency to aggregate into amyloid fibrils containing a cross-beta spine, formed by a steric zipper of superposed beta-strands. Soluble oligomers may represent an intermediate stage on the path to fibril formation. Copper binding may promote oligomerization. Interacts with GRB2, APP, ERI3/PRNPIP and SYN1. Mislocalized cytosolically exposed PrP interacts with MGRN1; this interaction alters MGRN1 subcellular location and causes lysosomal enlargement. Interacts with KIAA1191.

The protein localises to the cell membrane. The protein resides in the golgi apparatus. In terms of biological role, its primary physiological function is unclear. Has cytoprotective activity against internal or environmental stresses. May play a role in neuronal development and synaptic plasticity. May be required for neuronal myelin sheath maintenance. May play a role in iron uptake and iron homeostasis. Soluble oligomers are toxic to cultured neuroblastoma cells and induce apoptosis (in vitro). Association with GPC1 (via its heparan sulfate chains) targets PRNP to lipid rafts. Also provides Cu(2+) or Zn(2+) for the ascorbate-mediated GPC1 deaminase degradation of its heparan sulfate side chains. This Tragelaphus strepsiceros (Greater kudu) protein is Major prion protein 1.